The primary structure comprises 972 residues: POM121-like protein 2 (972 aa).

6 disordered regions span residues 1–67 (MGSY…PANP), 281–302 (LKKA…SGQL), 328–359 (TEED…IPEM), 406–431 (GISS…PVTD), 676–726 (LGLS…AIDG), and 953–972 (SKTL…TYKK). The segment covering 40–57 (RVQHVHRAQPARRHRPAR) has biased composition (basic residues). Polar residues-rich tracts occupy residues 287 to 302 (SPNS…SGQL) and 339 to 352 (VPSN…TGTA). Residues 413–431 (PSIASTQASPSSPTTPVTD) show a composition bias toward low complexity. Residues 677–696 (GLSSTNQPPVTSSNSNVTSA) are compositionally biased toward polar residues. A compositionally biased stretch (low complexity) spans 697–706 (LTSSLGSSPK).

Belongs to the POM121 family.

This is POM121-like protein 2 (Pom121l2) from Mus musculus (Mouse).